The chain runs to 329 residues: GTPase Obg (329 aa).

Positions Tyr-2 to Val-160 constitute an Obg domain. The OBG-type G domain maps to Ala-161–Lys-327. Residues Gly-167–Ser-174, Phe-192–Ile-196, Asp-213–Gly-216, Asn-280–Asp-283, and Ser-308–Tyr-310 contribute to the GTP site. Ser-174 and Thr-194 together coordinate Mg(2+).

This sequence belongs to the TRAFAC class OBG-HflX-like GTPase superfamily. OBG GTPase family. As to quaternary structure, monomer. Mg(2+) is required as a cofactor.

Its subcellular location is the cytoplasm. Its function is as follows. An essential GTPase which binds GTP, GDP and possibly (p)ppGpp with moderate affinity, with high nucleotide exchange rates and a fairly low GTP hydrolysis rate. Plays a role in control of the cell cycle, stress response, ribosome biogenesis and in those bacteria that undergo differentiation, in morphogenesis control. The chain is GTPase Obg from Borrelia garinii subsp. bavariensis (strain ATCC BAA-2496 / DSM 23469 / PBi) (Borreliella bavariensis).